We begin with the raw amino-acid sequence, 230 residues long: MKNLPIIALDFDSTEAVDQFLDQFNEPLFVKIGMELFYQTGPQLIASIKDRGHDIFLDLKLHDIPNTVGKAMEGLSKLNIDLVNVHAAGGTEMMKQALNGLQKHNPDIKLIAVTQLTSTTETMLHKEQNIQTSIEEAVLNYATLAQSSGLDGIVCSPLEAKLVKNELGNDFLKVTPGIRPKDASSDDQKRITTPEDAKELGSTHIVVGRPITKSENPVASYHKIKESWLG.

Residues aspartate 10, lysine 31, 58–67, threonine 117, arginine 179, glutamine 188, glycine 208, and arginine 209 each bind substrate; that span reads DLKLHDIPNT. Lysine 60 (proton donor) is an active-site residue. A disordered region spans residues 177-196; the sequence is GIRPKDASSDDQKRITTPED. A compositionally biased stretch (basic and acidic residues) spans 179–196; that stretch reads RPKDASSDDQKRITTPED.

The protein belongs to the OMP decarboxylase family. Type 1 subfamily. In terms of assembly, homodimer.

It carries out the reaction orotidine 5'-phosphate + H(+) = UMP + CO2. It participates in pyrimidine metabolism; UMP biosynthesis via de novo pathway; UMP from orotate: step 2/2. Functionally, catalyzes the decarboxylation of orotidine 5'-monophosphate (OMP) to uridine 5'-monophosphate (UMP). This Staphylococcus saprophyticus subsp. saprophyticus (strain ATCC 15305 / DSM 20229 / NCIMB 8711 / NCTC 7292 / S-41) protein is Orotidine 5'-phosphate decarboxylase.